Consider the following 423-residue polypeptide: Cytidylate cyclase (423 aa).

The 106-residue stretch at 79-184 (CSLFVDISGS…LKIRIGIDFG (106 aa)) folds into the Guanylate cyclase domain. F82 lines the a ribonucleoside 5'-triphosphate pocket. Residues D84, I85, and D128 each coordinate Mn(2+). The AGS-C domain stretch occupies residues 290-409 (ENEQFYSPRD…ICHDSFGLFI (120 aa)).

Belongs to the adenylyl cyclase class-4/guanylyl cyclase family. Pyrimidine cyclase subfamily. Homodimer. Mn(2+) is required as a cofactor.

It localises to the cytoplasm. It carries out the reaction CTP = 3',5'-cyclic CMP + diphosphate. Functionally, pycsar (pyrimidine cyclase system for antiphage resistance) provides immunity against bacteriophage. The pyrimidine cyclase (PycC) synthesizes cyclic nucleotides in response to infection; these serve as specific second messenger signals. The signal activates the adjacent effector, leading to bacterial cell death and abortive phage infection. A clade E Pycsar system. Its function is as follows. The pyrimidine cyclase gene of a two-gene Pycsar system, weakly generates cyclic CMP (cCMP) from CTP, has little to no activity on ATP, GTP or UTP. Expression of this and adjacent effector SaPycTM (AC P0DV39) probably confers resistance to bacteriophage. The genes are probably only expressed in response to bacteriophage infection. The chain is Cytidylate cyclase from Staphylococcus aureus.